The following is a 340-amino-acid chain: Phosphate acyltransferase (340 aa).

Residues 285 to 340 are disordered; sequence WRQSGRPARHRGQEPRRHRQPRFWLCHRRGRRRSPRQRNRTHPGTGQPPAGCAGAR. The segment covering 300–325 has biased composition (basic residues); the sequence is RRHRQPRFWLCHRRGRRRSPRQRNRT.

The protein belongs to the PlsX family. Homodimer. Probably interacts with PlsY.

It is found in the cytoplasm. The enzyme catalyses a fatty acyl-[ACP] + phosphate = an acyl phosphate + holo-[ACP]. The protein operates within lipid metabolism; phospholipid metabolism. In terms of biological role, catalyzes the reversible formation of acyl-phosphate (acyl-PO(4)) from acyl-[acyl-carrier-protein] (acyl-ACP). This enzyme utilizes acyl-ACP as fatty acyl donor, but not acyl-CoA. This Laribacter hongkongensis (strain HLHK9) protein is Phosphate acyltransferase.